The chain runs to 43 residues: Histone H3 (43 aa).

In terms of assembly, the nucleosome is a histone octamer containing two molecules each of H2A, H2B, H3 and H4 assembled in one H3-H4 heterotetramer and two H2A-H2B heterodimers. The octamer wraps approximately 147 bp of DNA.

Its subcellular location is the nucleus. It localises to the chromosome. Functionally, core component of nucleosome. Nucleosomes wrap and compact DNA into chromatin, limiting DNA accessibility to the cellular machineries which require DNA as a template. Histones thereby play a central role in transcription regulation, DNA repair, DNA replication and chromosomal stability. DNA accessibility is regulated via a complex set of post-translational modifications of histones, also called histone code, and nucleosome remodeling. This chain is Histone H3, found in Penaeus vannamei (Whiteleg shrimp).